The following is a 372-amino-acid chain: tRNA-specific 2-thiouridylase MnmA (372 aa).

ATP contacts are provided by residues 9–16 (GLSGGVDS) and methionine 35. The interval 95 to 97 (NPD) is interaction with target base in tRNA. Residue cysteine 100 is the Nucleophile of the active site. A disulfide bond links cysteine 100 and cysteine 198. Position 124 (glycine 124) interacts with ATP. The tract at residues 148–150 (KDQ) is interaction with tRNA. Cysteine 198 (cysteine persulfide intermediate) is an active-site residue. Positions 317–318 (RY) are interaction with tRNA.

This sequence belongs to the MnmA/TRMU family.

The protein localises to the cytoplasm. It carries out the reaction S-sulfanyl-L-cysteinyl-[protein] + uridine(34) in tRNA + AH2 + ATP = 2-thiouridine(34) in tRNA + L-cysteinyl-[protein] + A + AMP + diphosphate + H(+). Functionally, catalyzes the 2-thiolation of uridine at the wobble position (U34) of tRNA, leading to the formation of s(2)U34. This is tRNA-specific 2-thiouridylase MnmA from Delftia acidovorans (strain DSM 14801 / SPH-1).